We begin with the raw amino-acid sequence, 310 residues long: Vomeronasal type-1 receptor 40 (310 aa).

The Extracellular portion of the chain corresponds to Met1–Glu20. The chain crosses the membrane as a helical span at residues Val21–Gly41. At Glu42–Leu50 the chain is on the cytoplasmic side. Residues Tyr51–Val71 traverse the membrane as a helical segment. Residues Asp72–Arg93 lie on the Extracellular side of the membrane. A disulfide bond links Cys85 and Cys172. A helical membrane pass occupies residues Leu94–Leu114. The Cytoplasmic portion of the chain corresponds to Ser115–Gly134. A helical membrane pass occupies residues Ala135–Ile155. Over Ala156–Ala190 the chain is Extracellular. N-linked (GlcNAc...) asparagine glycosylation is present at Asn159. Residues Ile191–Leu211 traverse the membrane as a helical segment. Topologically, residues Trp212–Arg238 are cytoplasmic. A helical transmembrane segment spans residues Thr239–Tyr259. Topologically, residues Ser260–Ser268 are extracellular. A helical membrane pass occupies residues Ile269–Phe289. At Ile290–Ile310 the chain is on the cytoplasmic side.

Belongs to the G-protein coupled receptor 1 family.

It localises to the cell membrane. Functionally, putative pheromone receptor implicated in the regulation of social and reproductive behavior. The protein is Vomeronasal type-1 receptor 40 (Vmn1r40) of Mus musculus (Mouse).